The sequence spans 354 residues: UDP-N-acetylglucosamine--N-acetylmuramyl-(pentapeptide) pyrophosphoryl-undecaprenol N-acetylglucosamine transferase (354 aa).

Residues 11–13 (TAG), Arg-164, Ser-194, and Gln-289 each bind UDP-N-acetyl-alpha-D-glucosamine.

Belongs to the glycosyltransferase 28 family. MurG subfamily.

Its subcellular location is the cell membrane. It catalyses the reaction di-trans,octa-cis-undecaprenyl diphospho-N-acetyl-alpha-D-muramoyl-L-alanyl-D-glutamyl-meso-2,6-diaminopimeloyl-D-alanyl-D-alanine + UDP-N-acetyl-alpha-D-glucosamine = di-trans,octa-cis-undecaprenyl diphospho-[N-acetyl-alpha-D-glucosaminyl-(1-&gt;4)]-N-acetyl-alpha-D-muramoyl-L-alanyl-D-glutamyl-meso-2,6-diaminopimeloyl-D-alanyl-D-alanine + UDP + H(+). Its pathway is cell wall biogenesis; peptidoglycan biosynthesis. Cell wall formation. Catalyzes the transfer of a GlcNAc subunit on undecaprenyl-pyrophosphoryl-MurNAc-pentapeptide (lipid intermediate I) to form undecaprenyl-pyrophosphoryl-MurNAc-(pentapeptide)GlcNAc (lipid intermediate II). The sequence is that of UDP-N-acetylglucosamine--N-acetylmuramyl-(pentapeptide) pyrophosphoryl-undecaprenol N-acetylglucosamine transferase from Clostridium botulinum (strain Loch Maree / Type A3).